The chain runs to 348 residues: WD repeat-containing protein JIP5 (348 aa).

7 WD repeats span residues 5–44 (KLKN…GETS), 51–90 (PSKR…MTRE), 94–132 (AHEC…SIRT), 135–174 (QHFD…STPL), 179–218 (DQED…ADSV), 223–261 (GHPA…FLGV), and 264–304 (THEE…EDSD). Over residues 299 to 318 (LFEDSDEDDEMEEDEPDSDE) the composition is skewed to acidic residues. The segment at 299–348 (LFEDSDEDDEMEEDEPDSDEEKSKKKKKDNGMKDMSRGQAENDGSFFADL) is disordered.

It belongs to the WD repeat WDR55 family.

It is found in the nucleus. The protein localises to the nucleolus. This Cryptococcus neoformans var. neoformans serotype D (strain JEC21 / ATCC MYA-565) (Filobasidiella neoformans) protein is WD repeat-containing protein JIP5 (JIP5).